We begin with the raw amino-acid sequence, 167 residues long: MSKETPSEDDSRHRIVAVTLDEDSIGRSGPDIEHERAIAIYDLVEKNLFAPEGAEGGPFTLHIAITGNRLMFDIRREDGAPVVTHLLSLTPFRRIVKDYFMICDSYYQAIRTATPDKIEAIDMGRRGIHDEGSRTLQERLNGKVHVDFETARRLFTLISVLHWKGNA.

The protein belongs to the UPF0262 family.

In Nitrobacter winogradskyi (strain ATCC 25391 / DSM 10237 / CIP 104748 / NCIMB 11846 / Nb-255), this protein is UPF0262 protein Nwi_0248.